We begin with the raw amino-acid sequence, 89 residues long: Putative defensin-like protein 89 (89 aa).

The signal sequence occupies residues 1-25 (MGFKNNLSLVSVMVFALILLPMISG). Cystine bridges form between cysteine 30–cysteine 66, cysteine 36–cysteine 57, cysteine 42–cysteine 64, and cysteine 46–cysteine 65.

This sequence belongs to the DEFL family.

The protein localises to the secreted. The chain is Putative defensin-like protein 89 from Arabidopsis thaliana (Mouse-ear cress).